The sequence spans 120 residues: uncharacterized protein (120 aa).

This is an uncharacterized protein from Dictyostelium discoideum (Social amoeba).